Here is a 386-residue protein sequence, read N- to C-terminus: Chaperone protein DnaJ (386 aa).

Residues Asp-6–Gly-71 enclose the J domain. Residues Gly-144–His-226 form a CR-type zinc finger. Residues Cys-157, Cys-160, Cys-174, Cys-177, Cys-200, Cys-203, Cys-214, and Cys-217 each contribute to the Zn(2+) site. CXXCXGXG motif repeat units lie at residues Cys-157–Gly-164, Cys-174–Gly-181, Cys-200–Gly-207, and Cys-214–Gly-221.

Belongs to the DnaJ family. As to quaternary structure, homodimer. Zn(2+) serves as cofactor.

The protein resides in the cytoplasm. Functionally, participates actively in the response to hyperosmotic and heat shock by preventing the aggregation of stress-denatured proteins and by disaggregating proteins, also in an autonomous, DnaK-independent fashion. Unfolded proteins bind initially to DnaJ; upon interaction with the DnaJ-bound protein, DnaK hydrolyzes its bound ATP, resulting in the formation of a stable complex. GrpE releases ADP from DnaK; ATP binding to DnaK triggers the release of the substrate protein, thus completing the reaction cycle. Several rounds of ATP-dependent interactions between DnaJ, DnaK and GrpE are required for fully efficient folding. Also involved, together with DnaK and GrpE, in the DNA replication of plasmids through activation of initiation proteins. The protein is Chaperone protein DnaJ of Acetivibrio thermocellus (strain ATCC 27405 / DSM 1237 / JCM 9322 / NBRC 103400 / NCIMB 10682 / NRRL B-4536 / VPI 7372) (Clostridium thermocellum).